Consider the following 493-residue polypeptide: MENVRRMALGLVVMMALALSGVGASVMEDTLLSVLFETYNPKVRPAQTVGDKVTVRVGLTLTNLLILNEKIEEMTTNVFLNLAWTDYRLQWDPAAYEGIKDLRIPSSDVWQPDIVLMNNNDGSFEITLHVNVLVQHTGAVSWQPSAIYRSSCTIKVMYFPFDWQNCTMVFKSYTYDTSEVTLQHALDAKGEREVKEIVINKDAFTENGQWSIEHKPSRKNWRSDDPSYEDVTFYLIIQRKPLFYIVYTIIPCILISILAILVFYLPPDAGEKMSLSISALLAVTVFLLLLADKVPETSLSVPIIIRYLMFIMILVAFSVILSVVVLNLHHRSPNTHTMPNWIRQIFIETLPPFLWIQRPVTTPSPDSKPTIISRANDEYFIRKPAGDFVCPVDNARVAVQPERLFSEMKWHLNGLTQPVTLPQDLKEAVEAIKYIAEQLESASEFDDLKKDWQYVAMVADRLFLYVFFVICSIGTFSIFLDASHNVPPDNPFA.

The first 24 residues, methionine 1 to alanine 24, serve as a signal peptide directing secretion. Residues serine 25–lysine 240 lie on the Extracellular side of the membrane. Cysteine 152 and cysteine 166 form a disulfide bridge. Asparagine 165 is a glycosylation site (N-linked (GlcNAc...) asparagine). Transmembrane regions (helical) follow at residues proline 241–leucine 265, methionine 273–alanine 291, and tyrosine 307–leucine 328. Residues histidine 329–arginine 461 lie on the Cytoplasmic side of the membrane. Tyrosine 379 bears the Phosphotyrosine; by Tyr-kinases mark. Residues leucine 462–leucine 480 form a helical membrane-spanning segment.

Belongs to the ligand-gated ion channel (TC 1.A.9) family. Acetylcholine receptor (TC 1.A.9.1) subfamily. Beta-1/CHRNB1 sub-subfamily. Pentamer of two alpha chains, and one each of the beta, delta, and gamma chains.

It localises to the postsynaptic cell membrane. Its subcellular location is the cell membrane. The enzyme catalyses K(+)(in) = K(+)(out). It carries out the reaction Na(+)(in) = Na(+)(out). Its function is as follows. After binding acetylcholine, the AChR responds by an extensive change in conformation that affects all subunits and leads to opening of an ion-conducting channel across the plasma membrane. This chain is Acetylcholine receptor subunit beta (CHRNB1), found in Tetronarce californica (Pacific electric ray).